Consider the following 105-residue polypeptide: Large ribosomal subunit protein bL21 (105 aa).

Belongs to the bacterial ribosomal protein bL21 family. As to quaternary structure, part of the 50S ribosomal subunit. Contacts protein L20.

This protein binds to 23S rRNA in the presence of protein L20. The polypeptide is Large ribosomal subunit protein bL21 (Rickettsia typhi (strain ATCC VR-144 / Wilmington)).